The following is a 204-amino-acid chain: Linker for activation of T-cells family member 2 (204 aa).

Residues 1-7 (MNAELEL) are Extracellular-facing. A helical; Signal-anchor for type III membrane protein transmembrane segment spans residues 8 to 28 (LWPLSGLLLLLLLGTTAWLCV). 2 S-palmitoyl cysteine lipidation sites follow: cysteine 27 and cysteine 30. Residues 29–204 (QCSRPGVKRN…NGDVATTEKI (176 aa)) are Cytoplasmic-facing. Tyrosine 60 carries the post-translational modification Phosphotyrosine. Phosphoserine occurs at positions 61 and 96. Phosphotyrosine is present on residues tyrosine 140, tyrosine 161, and tyrosine 193. The interval 147-204 (KPSTPESGTEESEDYQNSVSILQWRESKRTMGARTSPSGSPDEEPDYVNGDVATTEKI) is disordered.

When phosphorylated, interacts with GRB2. May also interact with SOS1, GAB1 and CBL. Phosphorylated on tyrosines following cross-linking of BCR in B-cells, high affinity IgG receptor (FCGR1) in myeloid cells, or high affinity IgE receptor (FCER1) in mast cells; which induces the recruitment of GRB2.

The protein localises to the cell membrane. Functionally, involved in FCER1 (high affinity immunoglobulin epsilon receptor)-mediated signaling in mast cells. May also be involved in BCR (B-cell antigen receptor)-mediated signaling in B-cells and FCGR1 (high affinity immunoglobulin gamma Fc receptor I)-mediated signaling in myeloid cells. Couples activation of these receptors and their associated kinases with distal intracellular events through the recruitment of GRB2. The protein is Linker for activation of T-cells family member 2 (Lat2) of Rattus norvegicus (Rat).